Consider the following 163-residue polypeptide: MYILPEELRAELKRPLGELHRSFSDVDVGNSFLITVGDVTTRNALEHGLKPDVSIIDNRIQRRDSDHEFRDTATILRSRNPPGTVTESLWKSIEEAIEGATERGERFMIVVDGEEDLAVLPSILLAPPDTVILYGQPDEGVVLVRASETSSKAEELMKKFEEA.

GTP contacts are provided by Asp-38, Val-39, Asp-57, Glu-115, and Asp-138.

The protein belongs to the GTP-dependent DPCK family.

The catalysed reaction is 3'-dephospho-CoA + GTP = GDP + CoA + H(+). It functions in the pathway cofactor biosynthesis; coenzyme A biosynthesis. In terms of biological role, catalyzes the GTP-dependent phosphorylation of the 3'-hydroxyl group of dephosphocoenzyme A to form coenzyme A (CoA). This Methanothermobacter thermautotrophicus (strain ATCC 29096 / DSM 1053 / JCM 10044 / NBRC 100330 / Delta H) (Methanobacterium thermoautotrophicum) protein is GTP-dependent dephospho-CoA kinase.